Here is a 576-residue protein sequence, read N- to C-terminus: 2-succinyl-5-enolpyruvyl-6-hydroxy-3-cyclohexene-1-carboxylate synthase (576 aa).

The protein belongs to the TPP enzyme family. MenD subfamily. As to quaternary structure, homodimer. Mg(2+) serves as cofactor. The cofactor is Mn(2+). Requires thiamine diphosphate as cofactor.

It carries out the reaction isochorismate + 2-oxoglutarate + H(+) = 5-enolpyruvoyl-6-hydroxy-2-succinyl-cyclohex-3-ene-1-carboxylate + CO2. It participates in quinol/quinone metabolism; 1,4-dihydroxy-2-naphthoate biosynthesis; 1,4-dihydroxy-2-naphthoate from chorismate: step 2/7. It functions in the pathway quinol/quinone metabolism; menaquinone biosynthesis. In terms of biological role, catalyzes the thiamine diphosphate-dependent decarboxylation of 2-oxoglutarate and the subsequent addition of the resulting succinic semialdehyde-thiamine pyrophosphate anion to isochorismate to yield 2-succinyl-5-enolpyruvyl-6-hydroxy-3-cyclohexene-1-carboxylate (SEPHCHC). This Aliivibrio fischeri (strain ATCC 700601 / ES114) (Vibrio fischeri) protein is 2-succinyl-5-enolpyruvyl-6-hydroxy-3-cyclohexene-1-carboxylate synthase.